A 609-amino-acid chain; its full sequence is MCGIVGAIAQRDVAEILLEGLRRLEYRGYDSAGLAVVDAEGHMTRLRRLGKVQMLAQAAEEHPLHGGTGIAHTRWATHGEPSEVNAHPHVSEHIVVVHNGIIENHEPLREELKARGYTFVSETDTEVIAHLVNWELKQGGTLREAVLRAIPQLRGAYGTVIMDSRHPDTLLAARSGSPLVIGLGMGENFIASDQLALLPVTRRFIFLEEGDIAEITRRSVNIFDKTGAEVKRQDIESNLQYDAGDKGIYRHYMQKEIYEQPNAIKNTLTGRISHGQVDLSELGPNADELLSKVEHIQILACGTSYNSGMVSRYWFESLAGIPCDVEIASEFRYRKSAVRRNSLMITLSQSGETADTLAGLRLSKELGYLGSLAICNVPGSSLVRESDLALMTNAGTEIGVASTKAFTTQLTVLLMLVAKLSRLKGLDASIEHDIVHGLQALPSRIEQMLSQDKRIEALAEDFSDKHHALFLGRGDQYPIALEGALKLKEISYIHAEAYAAGELKHGPLALIDADMPVIVVAPNNELLEKLKSNIEEVRARGGQLYVFADQDAGFVSSDNMHIIEMPHVEEVIAPIFYTVPLQLLAYHVALIKGTDVDQPRNLAKSVTVE.

The active-site Nucleophile; for GATase activity is Cys-2. Residues 2-218 enclose the Glutamine amidotransferase type-2 domain; that stretch reads CGIVGAIAQR…EGDIAEITRR (217 aa). SIS domains lie at 286–426 and 458–599; these read ADEL…LKGL and LAED…VDQP. Catalysis depends on Lys-604, which acts as the For Fru-6P isomerization activity.

As to quaternary structure, homodimer. In pull-down experiments interacts with CedA.

It is found in the cytoplasm. The catalysed reaction is D-fructose 6-phosphate + L-glutamine = D-glucosamine 6-phosphate + L-glutamate. Its function is as follows. Catalyzes the first step in hexosamine metabolism, converting fructose-6P into glucosamine-6P using glutamine as a nitrogen source. The sequence is that of Glutamine--fructose-6-phosphate aminotransferase [isomerizing] (glmS) from Escherichia coli (strain K12).